Consider the following 1080-residue polypeptide: Carbamoyl phosphate synthase large chain (1080 aa).

Positions 1-403 (MPKRTDLKTI…SLQKALRGLE (403 aa)) are carboxyphosphate synthetic domain. Residues Arg-129, Arg-169, Gly-175, Gly-176, Glu-208, Val-210, Glu-215, Gly-241, Val-242, His-243, Gln-285, and Glu-299 each contribute to the ATP site. An ATP-grasp 1 domain is found at 133 to 328 (RVAMGEIGLD…IAKVAAKLAV (196 aa)). The Mg(2+) site is built by Gln-285, Glu-299, and Asn-301. 3 residues coordinate Mn(2+): Gln-285, Glu-299, and Asn-301. The segment at 404 to 554 (TGKIGLDPTG…YSTYEDECEA (151 aa)) is oligomerization domain. The segment at 555–942 (LPSNRDKIMI…AFARAQEAGG (388 aa)) is carbamoyl phosphate synthetic domain. The ATP-grasp 2 domain occupies 679-876 (QQLVDKLGLK…LAKIAARCMA (198 aa)). Residues Arg-715, Arg-754, Leu-756, Glu-761, Gly-787, Val-788, His-789, Ser-790, Gln-830, and Glu-847 each coordinate ATP. The Mg(2+) site is built by Gln-830, Glu-847, and Asn-849. The Mn(2+) site is built by Gln-830, Glu-847, and Asn-849. Residues 943–1080 (IKAPPLGKAF…LQELHKELEA (138 aa)) enclose the MGS-like domain. Residues 943–1080 (IKAPPLGKAF…LQELHKELEA (138 aa)) form an allosteric domain region.

Belongs to the CarB family. Composed of two chains; the small (or glutamine) chain promotes the hydrolysis of glutamine to ammonia, which is used by the large (or ammonia) chain to synthesize carbamoyl phosphate. Tetramer of heterodimers (alpha,beta)4. The cofactor is Mg(2+). Mn(2+) is required as a cofactor.

The catalysed reaction is hydrogencarbonate + L-glutamine + 2 ATP + H2O = carbamoyl phosphate + L-glutamate + 2 ADP + phosphate + 2 H(+). It catalyses the reaction hydrogencarbonate + NH4(+) + 2 ATP = carbamoyl phosphate + 2 ADP + phosphate + 2 H(+). It functions in the pathway amino-acid biosynthesis; L-arginine biosynthesis; carbamoyl phosphate from bicarbonate: step 1/1. Its pathway is pyrimidine metabolism; UMP biosynthesis via de novo pathway; (S)-dihydroorotate from bicarbonate: step 1/3. In terms of biological role, large subunit of the glutamine-dependent carbamoyl phosphate synthetase (CPSase). CPSase catalyzes the formation of carbamoyl phosphate from the ammonia moiety of glutamine, carbonate, and phosphate donated by ATP, constituting the first step of 2 biosynthetic pathways, one leading to arginine and/or urea and the other to pyrimidine nucleotides. The large subunit (synthetase) binds the substrates ammonia (free or transferred from glutamine from the small subunit), hydrogencarbonate and ATP and carries out an ATP-coupled ligase reaction, activating hydrogencarbonate by forming carboxy phosphate which reacts with ammonia to form carbamoyl phosphate. This Xanthomonas campestris pv. campestris (strain ATCC 33913 / DSM 3586 / NCPPB 528 / LMG 568 / P 25) protein is Carbamoyl phosphate synthase large chain.